The chain runs to 2059 residues: DNA polymerase theta (2059 aa).

A disordered region spans residues 25–45 (DKENAQPGNGNIQVQSAGNEV). The segment covering 30-45 (QPGNGNIQVQSAGNEV) has biased composition (polar residues). Residues 243 to 416 (PRLLFEHCNL…WLDAELYITN (174 aa)) form the Helicase ATP-binding domain. Residue 256-263 (APTSAGKT) coordinates ATP. Positions 357-360 (DEVH) match the DEAH box motif. One can recognise a Helicase C-terminal domain in the interval 464-666 (CIETLLEGCS…HLKRALLEVI (203 aa)). 4 disordered regions span residues 1052–1073 (PPVK…KNPR), 1168–1190 (PQLA…VNEG), 1204–1274 (QRTQ…SRKV), and 1330–1372 (PHAS…GVSS). The span at 1062 to 1071 (ENGTANSQKN) shows a compositional bias: polar residues. Positions 1213-1274 (KDQPIQASRS…NANRTASRKV (62 aa)) are enriched in polar residues. Basic and acidic residues predominate over residues 1355-1365 (REIEIDLESKN).

This sequence belongs to the DNA polymerase type-A family. Mg(2+) serves as cofactor. Post-translationally, in adult males, cleaved to produce a 100 kDa form. Expressed in ovaries (at protein level).

It is found in the nucleus. The catalysed reaction is DNA(n) + a 2'-deoxyribonucleoside 5'-triphosphate = DNA(n+1) + diphosphate. With respect to regulation, resistant to aphidicolin, but sensitive to dideoxythymindine triphosphate (ddTTP) and N-ethyl malemide (NEM). In terms of biological role, multifunctional protein with both DNA polymerase and ATPase activities. Might have 3' to 5' exonuclease activity. Plays a role in different DNA repair pathways such as DNA strand cross-link repair and microhomology-mediated end-joining (MMEJ), an alternative non-homologous end-joining (NHEJ) machinery triggered in response to double-strand breaks. MMEJ is an error-prone repair pathway that produces deletions of sequences from the strand being repaired and promotes genomic rearrangements, such as telomere fusions. Utilizes short microhomologies present in partially and fully single-stranded DNA (ssDNA) as primers for DNA synthesis. Prefers poly(dA)/oligo(dT) as a template-primer. The ATPase activity is necessary during interstrand cross-link (ICL) repair and has a critical role in generating templated insertions during MMEJ. Necessary for processing DNA damage induced by oxygen and N-ethylation. In follicle cells, contributes to double-strand break repair at physiological rereplication forks necessary for survival of fertilized eggs. The chain is DNA polymerase theta from Drosophila melanogaster (Fruit fly).